Consider the following 290-residue polypeptide: ATP synthase gamma chain (290 aa).

This sequence belongs to the ATPase gamma chain family. As to quaternary structure, F-type ATPases have 2 components, CF(1) - the catalytic core - and CF(0) - the membrane proton channel. CF(1) has five subunits: alpha(3), beta(3), gamma(1), delta(1), epsilon(1). CF(0) has three main subunits: a, b and c.

The protein resides in the cell inner membrane. Its function is as follows. Produces ATP from ADP in the presence of a proton gradient across the membrane. The gamma chain is believed to be important in regulating ATPase activity and the flow of protons through the CF(0) complex. The chain is ATP synthase gamma chain from Chelativorans sp. (strain BNC1).